Consider the following 247-residue polypeptide: Adenosine 5'-phosphosulfate reductase (247 aa).

Positions 133, 134, 216, and 219 each coordinate [4Fe-4S] cluster. The interval 222–247 is disordered; that stretch reads KPAPGSDPRSGRWAGQAKTECGLHAS. Cysteine 242 functions as the Nucleophile; cysteine thiosulfonate intermediate in the catalytic mechanism.

The protein belongs to the PAPS reductase family. CysH subfamily. Requires [4Fe-4S] cluster as cofactor.

The protein localises to the cytoplasm. It carries out the reaction [thioredoxin]-disulfide + sulfite + AMP + 2 H(+) = adenosine 5'-phosphosulfate + [thioredoxin]-dithiol. The protein operates within sulfur metabolism; hydrogen sulfide biosynthesis; sulfite from sulfate. In terms of biological role, catalyzes the formation of sulfite from adenosine 5'-phosphosulfate (APS) using thioredoxin as an electron donor. In Rhodococcus opacus (strain B4), this protein is Adenosine 5'-phosphosulfate reductase.